Reading from the N-terminus, the 883-residue chain is Alanine--tRNA ligase (883 aa).

Zn(2+)-binding residues include His-560, His-564, Cys-665, and His-669.

This sequence belongs to the class-II aminoacyl-tRNA synthetase family. Zn(2+) serves as cofactor.

It is found in the cytoplasm. The enzyme catalyses tRNA(Ala) + L-alanine + ATP = L-alanyl-tRNA(Ala) + AMP + diphosphate. Catalyzes the attachment of alanine to tRNA(Ala) in a two-step reaction: alanine is first activated by ATP to form Ala-AMP and then transferred to the acceptor end of tRNA(Ala). Also edits incorrectly charged Ser-tRNA(Ala) and Gly-tRNA(Ala) via its editing domain. The sequence is that of Alanine--tRNA ligase from Mesomycoplasma hyopneumoniae (strain 7448) (Mycoplasma hyopneumoniae).